Reading from the N-terminus, the 471-residue chain is Ribulose bisphosphate carboxylase large chain 2 (471 aa).

The substrate site is built by Asn116 and Thr166. Lys168 (proton acceptor) is an active-site residue. A substrate-binding site is contributed by Lys170. Mg(2+) is bound by residues Lys194, Asp196, and Glu197. Lys194 bears the N6-carboxylysine mark. His287 acts as the Proton acceptor in catalysis. 3 residues coordinate substrate: Arg288, His320, and Ser372.

It belongs to the RuBisCO large chain family. Type I subfamily. As to quaternary structure, heterohexadecamer of 8 large chains and 8 small chains; disulfide-linked. The disulfide link is formed within the large subunit homodimers. Mg(2+) serves as cofactor. The disulfide bond which can form in the large chain dimeric partners within the hexadecamer appears to be associated with oxidative stress and protein turnover.

It catalyses the reaction 2 (2R)-3-phosphoglycerate + 2 H(+) = D-ribulose 1,5-bisphosphate + CO2 + H2O. The catalysed reaction is D-ribulose 1,5-bisphosphate + O2 = 2-phosphoglycolate + (2R)-3-phosphoglycerate + 2 H(+). Functionally, ruBisCO catalyzes two reactions: the carboxylation of D-ribulose 1,5-bisphosphate, the primary event in carbon dioxide fixation, as well as the oxidative fragmentation of the pentose substrate. Both reactions occur simultaneously and in competition at the same active site. The protein is Ribulose bisphosphate carboxylase large chain 2 of Allochromatium vinosum (strain ATCC 17899 / DSM 180 / NBRC 103801 / NCIMB 10441 / D) (Chromatium vinosum).